The following is a 308-amino-acid chain: D-alanine--D-alanine ligase (308 aa).

The 200-residue stretch at 103-302 folds into the ATP-grasp domain; it reads KFVFRAAGLP…YGELVSWMVE (200 aa). Position 130 to 184 (130 to 184) interacts with ATP; the sequence is MDPPYVIKPVSEGSSVGVFIVRAGDNRPPAELTSAEWNLGDEVMAERYIAGRELT. 3 residues coordinate Mg(2+): D252, E269, and N271.

The protein belongs to the D-alanine--D-alanine ligase family. Mg(2+) serves as cofactor. It depends on Mn(2+) as a cofactor.

The protein resides in the cytoplasm. The catalysed reaction is 2 D-alanine + ATP = D-alanyl-D-alanine + ADP + phosphate + H(+). The protein operates within cell wall biogenesis; peptidoglycan biosynthesis. Cell wall formation. The polypeptide is D-alanine--D-alanine ligase (Parvibaculum lavamentivorans (strain DS-1 / DSM 13023 / NCIMB 13966)).